A 759-amino-acid polypeptide reads, in one-letter code: Zinc finger protein 287 (759 aa).

In terms of domain architecture, SCAN box spans 42-124 (RRNFRNFPYP…ALVEDLTQIL (83 aa)). Positions 127 to 154 (EEAPQSSALPQDTPEDDPNHDPNPASQA) are disordered. A KRAB domain is found at 166–234 (VTFNDVAVDI…IKEIVEGPNP (69 aa)). 14 consecutive C2H2-type zinc fingers follow at residues 366–388 (YSCN…RENH), 394–416 (YECE…QRMH), 422–444 (YECH…QRIH), 450–472 (YKCE…QRTH), 478–500 (YKCL…QRVH), 506–528 (YICN…QKIH), 534–556 (YKCN…QRIH), 562–584 (YKCT…QTTH), 590–612 (YICN…HRTH), 618–640 (YKCS…QRIH), 646–668 (FKCN…QRVH), 674–696 (YKCH…RRTH), 702–724 (YKCS…QRIH), and 730–752 (YGCR…QRVH).

The protein belongs to the krueppel C2H2-type zinc-finger protein family. As to expression, expressed in brain and at low levels in kidney and spleen and few hematopoietic cell lines.

Its subcellular location is the nucleus. Functionally, may be involved in transcriptional regulation. The sequence is that of Zinc finger protein 287 from Mus musculus (Mouse).